Reading from the N-terminus, the 428-residue chain is Adenylosuccinate synthetase (428 aa).

GTP is bound by residues 12 to 18 (GDEGKGK) and 40 to 42 (GHT). Asp13 serves as the catalytic Proton acceptor. The Mg(2+) site is built by Asp13 and Gly40. IMP contacts are provided by residues 13–16 (DEGK), 38–41 (NAGH), Thr127, Arg141, Gln222, Thr237, and Arg301. Catalysis depends on His41, which acts as the Proton donor. 297 to 303 (TVTKRPR) provides a ligand contact to substrate. Residues Arg303, 329-331 (CLD), and 411-413 (SVG) contribute to the GTP site.

Belongs to the adenylosuccinate synthetase family. Homodimer. Mg(2+) serves as cofactor.

It localises to the cytoplasm. The catalysed reaction is IMP + L-aspartate + GTP = N(6)-(1,2-dicarboxyethyl)-AMP + GDP + phosphate + 2 H(+). The protein operates within purine metabolism; AMP biosynthesis via de novo pathway; AMP from IMP: step 1/2. Plays an important role in the de novo pathway of purine nucleotide biosynthesis. Catalyzes the first committed step in the biosynthesis of AMP from IMP. This chain is Adenylosuccinate synthetase, found in Levilactobacillus brevis (strain ATCC 367 / BCRC 12310 / CIP 105137 / JCM 1170 / LMG 11437 / NCIMB 947 / NCTC 947) (Lactobacillus brevis).